The following is a 143-amino-acid chain: Hemoglobin subunit alpha (143 aa).

The residue at position 2 (Ser-2) is an N-acetylserine. Residues 2–143 (SLSDKDKAAV…LALALSEKYR (142 aa)) enclose the Globin domain. His-60 contacts O2. Position 89 (His-89) interacts with heme b.

The protein belongs to the globin family. As to quaternary structure, heterotetramer of two alpha chains and two beta chains. Red blood cells.

Functionally, involved in oxygen transport from gills to the various peripheral tissues. This chain is Hemoglobin subunit alpha (hba), found in Cyprinus carpio (Common carp).